Here is a 259-residue protein sequence, read N- to C-terminus: uncharacterized protein (259 aa).

The disordered stretch occupies residues 171–259; it reads LSKMPVPQSP…SYSTYEDDDF (89 aa). Residues 179-201 are compositionally biased toward polar residues; sequence SPSVPTMPSVNNDQPTQKPNKIT. Basic residues predominate over residues 202-211; the sequence is RNYKPKHQHN. The span at 212–236 shows a compositional bias: polar residues; that stretch reads YKPNYQPNYQPNYGQNCSNSHSNDY.

The protein localises to the virion. This is an uncharacterized protein from Acanthamoeba polyphaga (Amoeba).